Here is a 284-residue protein sequence, read N- to C-terminus: MDAIKKKMQAMKIEKDNAMDRADAAEEKARQQQERVEKLEEELRDTQKKMMQVENELDKAQEELTGANAQLEEKEKKVQEAEAEVAALNRRIQLLEEDFERAEERLKIATEKLEEASQTADESERVRKVMENRSLQDEERVYQLEAQLKEAQLLAEEADRKYDEVARKLAMVEADLERAEERAEAGENKIVELEEELRVVGNNLKSLEVSEEKALQREDSYEEQIRLLTQRLKEAETRAEFAERSVQKLQKEVDRLEDELVHEKEKYKAISEELDQTFQELSGY.

The segment at 1–47 is disordered; the sequence is MDAIKKKMQAMKIEKDNAMDRADAAEEKARQQQERVEKLEEELRDTQ. Positions 1–284 form a coiled coil; the sequence is MDAIKKKMQA…DQTFQELSGY (284 aa). Over residues 12 to 38 the composition is skewed to basic and acidic residues; it reads KIEKDNAMDRADAAEEKARQQQERVEK.

It belongs to the tropomyosin family. In terms of assembly, homodimer.

In terms of biological role, tropomyosin, in association with the troponin complex, plays a central role in the calcium dependent regulation of muscle contraction. The polypeptide is Tropomyosin (Trichinella pseudospiralis (Parasitic roundworm)).